Consider the following 773-residue polypeptide: Endoribonuclease YSH1 (773 aa).

Residues 1–22 are disordered; sequence MIPRRHHFKPAPQPTVQVLQPP. Residues H88, H90, D92, H93, H181, and D202 each coordinate Zn(2+). Catalysis depends on H421, which acts as the Proton donor. H443 is a Zn(2+) binding site. Positions 624 to 637 are enriched in polar residues; it reads ASPNKHACNHSNSH. 2 disordered regions span residues 624–656 and 677–702; these read ASPN…AKDV and EGPN…KDGD.

Belongs to the metallo-beta-lactamase superfamily. RNA-metabolizing metallo-beta-lactamase-like family. CPSF2/YSH1 subfamily.

Its subcellular location is the nucleus. Component of the cleavage factor I (CF I) involved in pre-mRNA 3'-end processing. This Cryptococcus neoformans var. neoformans serotype D (strain B-3501A) (Filobasidiella neoformans) protein is Endoribonuclease YSH1 (YSH1).